Consider the following 137-residue polypeptide: Interferon-induced transmembrane protein 3 (137 aa).

The Cytoplasmic portion of the chain corresponds to 1-57 (MNHTSQAFITAASGGQPPNYERIKEEYEVAEMGAPHGSASVRTTVINMPREVSVPDH). A Phosphotyrosine modification is found at Tyr20. Lys24 is covalently cross-linked (Glycyl lysine isopeptide (Lys-Gly) (interchain with G-Cter in ubiquitin)). Tyr27 carries the post-translational modification Phosphotyrosine. The segment at residues 58–78 (VVWSLFNTLFMNFCCLGFIAY) is an intramembrane region (helical). An interaction with SPP1 region spans residues 60–93 (WSLFNTLFMNFCCLGFIAYAYSVKSRDRKMVGDV). Residues Cys71 and Cys72 are each lipidated (S-palmitoyl cysteine). Topologically, residues 79–109 (AYSVKSRDRKMVGDVTGAQAYASTAKCLNIS) are cytoplasmic. Residues Lys83, Lys88, and Lys104 each participate in a glycyl lysine isopeptide (Lys-Gly) (interchain with G-Cter in ubiquitin) cross-link. Cys105 is lipidated: S-palmitoyl cysteine. An interaction with VAPA region spans residues 108-133 (ISTLVLSILMVVITIVSVIIIVLNAQ). Residues 110–130 (TLVLSILMVVITIVSVIIIVL) traverse the membrane as a helical segment. Topologically, residues 131–137 (NAQNLHT) are extracellular.

This sequence belongs to the CD225/Dispanin family. Interacts with ATP6V0B. Interacts with CD81. Interacts with SPP1; the interaction reduces OPN expression. Interacts with BRI3. Polyubiquitinated with both 'Lys-48' and 'Lys-63' linkages. Ubiquitination negatively regulates antiviral activity. Lys-24 is the most prevalent ubiquitination site. In terms of processing, phosphorylation at Tyr-20 is required for endosomal and lysosomal location. As to expression, expressed in acinar cell. Predominantly expressed in nascent primordial germ cells, as well as in gonadal germ cells.

Its subcellular location is the cell membrane. It is found in the late endosome membrane. The protein localises to the early endosome membrane. The protein resides in the lysosome membrane. It localises to the cytoplasm. Its subcellular location is the perinuclear region. Its function is as follows. IFN-induced antiviral protein which disrupts intracellular cholesterol homeostasis. Inhibits the entry of viruses to the host cell cytoplasm by preventing viral fusion with cholesterol depleted endosomes. May inactivate new enveloped viruses which buds out of the infected cell, by letting them go out with a cholesterol depleted membrane. Active against multiple viruses, including influenza A virus, SARS coronaviruses (SARS-CoV and SARS-CoV-2), Marburg virus (MARV), Ebola virus (EBOV), Dengue virus (DNV), West Nile virus (WNV), human immunodeficiency virus type 1 (HIV-1), hepatitis C virus (HCV) and vesicular stomatitis virus (VSV). Can inhibit: influenza virus hemagglutinin protein-mediated viral entry, MARV and EBOV GP1,2-mediated viral entry, SARS-CoV and SARS-CoV-2 S protein-mediated viral entry and VSV G protein-mediated viral entry. Plays a critical role in the structural stability and function of vacuolar ATPase (v-ATPase). Establishes physical contact with the v-ATPase of endosomes which is critical for proper clathrin localization and is also required for the function of the v-ATPase to lower the pH in phagocytic endosomes thus establishing an antiviral state. In hepatocytes, IFITM proteins act in a coordinated manner to restrict HCV infection by targeting the endocytosed HCV virion for lysosomal degradation. IFITM2 and IFITM3 display anti-HCV activity that may complement the anti-HCV activity of IFITM1 by inhibiting the late stages of HCV entry, possibly in a coordinated manner by trapping the virion in the endosomal pathway and targeting it for degradation at the lysosome. Exerts opposing activities on SARS-CoV-2, including amphipathicity-dependent restriction of virus at endosomes and amphipathicity-independent enhancement of infection at the plasma membrane. This is Interferon-induced transmembrane protein 3 from Mus musculus (Mouse).